The primary structure comprises 387 residues: Transmembrane protein 120 homolog (387 aa).

Positions 1-39 (MNIDSLKNEWEELNKEFAELESCNRRYIELLEQLHSHQQ) form a coiled coil. Residue asparagine 111 is glycosylated (N-linked (GlcNAc...) asparagine). Transmembrane regions (helical) follow at residues 130–150 (FKLI…IFNY), 155–175 (LAFI…ESIL), 191–211 (FIST…HWQI), 216–238 (FMYF…KGLL), 264–284 (GLSF…YNAW), and 302–322 (VMSG…LWVV). The tract at residues 346 to 387 (RKEMKNSASDLDLSSGSKLSPTATTTTSIATATQTPAEKKET) is disordered. 3 positions are modified to phosphoserine: serine 352, serine 354, and serine 365. Over residues 352-381 (SASDLDLSSGSKLSPTATTTTSIATATQTP) the composition is skewed to low complexity.

The protein belongs to the TMEM120 family.

It localises to the membrane. The polypeptide is Transmembrane protein 120 homolog (Drosophila melanogaster (Fruit fly)).